We begin with the raw amino-acid sequence, 697 residues long: Methionine--tRNA ligase (697 aa).

The 'HIGH' region signature appears at 12 to 22 (PYANGHFHIGH). Cys-143, Cys-146, Cys-156, and Cys-159 together coordinate Zn(2+). The 'KMSKS' region motif lies at 342 to 346 (KMSKS). Lys-345 is a binding site for ATP. The interval 557 to 577 (FEPPAEPSPQTSPAAAGAGAV) is disordered. Positions 591-697 (DFTKIDLRLA…PGAVPGLRVR (107 aa)) constitute a tRNA-binding domain.

This sequence belongs to the class-I aminoacyl-tRNA synthetase family. MetG type 1 subfamily. Homodimer. Requires Zn(2+) as cofactor.

Its subcellular location is the cytoplasm. The enzyme catalyses tRNA(Met) + L-methionine + ATP = L-methionyl-tRNA(Met) + AMP + diphosphate. In terms of biological role, is required not only for elongation of protein synthesis but also for the initiation of all mRNA translation through initiator tRNA(fMet) aminoacylation. In Methylibium petroleiphilum (strain ATCC BAA-1232 / LMG 22953 / PM1), this protein is Methionine--tRNA ligase.